The following is a 486-amino-acid chain: Ribulose bisphosphate carboxylase large chain (486 aa).

The propeptide occupies 1 to 2 (MS). The substrate site is built by Asn-123 and Thr-173. Residue Lys-175 is the Proton acceptor of the active site. Lys-177 contacts substrate. 3 residues coordinate Mg(2+): Lys-201, Asp-203, and Glu-204. Lys-201 bears the N6-carboxylysine mark. Ser-208 is subject to Phosphoserine. Residue His-294 is the Proton acceptor of the active site. The substrate site is built by Arg-295 and His-327. Thr-330 carries the phosphothreonine modification. Residue Ser-379 coordinates substrate.

This sequence belongs to the RuBisCO large chain family. Type I subfamily. In terms of assembly, heterohexadecamer of 8 large chains and 8 small chains; disulfide-linked. The disulfide link is formed within the large subunit homodimers. Mg(2+) serves as cofactor. In terms of processing, the disulfide bond which can form in the large chain dimeric partners within the hexadecamer appears to be associated with oxidative stress and protein turnover.

Its subcellular location is the plastid. It localises to the chloroplast. The enzyme catalyses 2 (2R)-3-phosphoglycerate + 2 H(+) = D-ribulose 1,5-bisphosphate + CO2 + H2O. It carries out the reaction D-ribulose 1,5-bisphosphate + O2 = 2-phosphoglycolate + (2R)-3-phosphoglycerate + 2 H(+). Functionally, ruBisCO catalyzes two reactions: the carboxylation of D-ribulose 1,5-bisphosphate, the primary event in carbon dioxide fixation, as well as the oxidative fragmentation of the pentose substrate in the photorespiration process. Both reactions occur simultaneously and in competition at the same active site. The sequence is that of Ribulose bisphosphate carboxylase large chain from Aethionema grandiflorum (Persian stone-cress).